Reading from the N-terminus, the 38-residue chain is Large ribosomal subunit protein bL36 (38 aa).

It belongs to the bacterial ribosomal protein bL36 family.

This chain is Large ribosomal subunit protein bL36, found in Limosilactobacillus fermentum (strain NBRC 3956 / LMG 18251) (Lactobacillus fermentum).